A 1373-amino-acid polypeptide reads, in one-letter code: Disease resistance protein RRS1 (1373 aa).

Positions 5 to 146 (EKDEEFVCIS…EIVRDVYETH (142 aa)) constitute a TIR domain. Residues 170-421 (IGIRCVGIWG…LLEGCGFFPH (252 aa)) enclose the NB-ARC domain. 179-186 (GMPGIGKT) contacts ATP. LRR repeat units lie at residues 498–522 (SEEIEGLFLDTSNLRFDLQPSAFKN), 535–553 (NPEVHPVINFPTGSLHSLP), 554–575 (NELRLLHWENYPLKSLPQNFDP), 577–598 (HLVEINMPYSQLQKLWGGTKNL), 621–646 (AENLEVIDLQGCTRLQNFPAAGRLLR), 665–688 (PPNIEKLHLQGTGILALPVSTVKP), 742–766 (LPNMANLDLNVLDLSGCSSLNSIQG), 768–793 (PRFLKQLYLGGTAIREVPQLPQSLEI), and 831–854 (PRNLKELYFAGTTLREVPQLPLSL). The short motif at 988-1005 (RNFHCWAPGKVVPKVRKD) is the Nuclear localization signal element. The segment at residues 1204–1272 (IPAIDEGDLW…YLSEHNHPRP (69 aa)) is a DNA-binding region (WRKY). The segment at 1300 to 1323 (RVFQNKDEPNKPHLPSSSTPPGNA) is disordered.

Interacts with PopP2, a R.solanacearum type III effector.

It is found in the nucleus. Transcription factor. Interacts specifically with the W box (5'-(T)TGAC[CT]-3'), a frequently occurring elicitor-responsive cis-acting element. Also acts as a disease resistance protein involved in resistance to fungal and bacterial pathogens, including R.solanacearum, P.syringae pv. tomato and C.higginsianum. The chain is Disease resistance protein RRS1 from Arabidopsis thaliana (Mouse-ear cress).